The primary structure comprises 99 residues: Acylphosphatase-2 (99 aa).

Ser-2 is modified (N-acetylserine). An Acylphosphatase-like domain is found at 9–99 (SVDYEVFGRV…LEYSNFSIRY (91 aa)). Catalysis depends on residues Arg-24 and Asn-42. Ser-93 carries the post-translational modification Phosphoserine.

Belongs to the acylphosphatase family.

It catalyses the reaction an acyl phosphate + H2O = a carboxylate + phosphate + H(+). Its physiological role is not yet clear. The chain is Acylphosphatase-2 (ACYP2) from Homo sapiens (Human).